A 276-amino-acid polypeptide reads, in one-letter code: Large ribosomal subunit protein uL2 (276 aa).

The disordered stretch occupies residues 219–268 (TVRGSVMNPNDHPHGGGEGRQPVGRKSPMTPWGKPALGLKTRNKKAKSSK).

The protein belongs to the universal ribosomal protein uL2 family. In terms of assembly, part of the 50S ribosomal subunit. Forms a bridge to the 30S subunit in the 70S ribosome.

Its function is as follows. One of the primary rRNA binding proteins. Required for association of the 30S and 50S subunits to form the 70S ribosome, for tRNA binding and peptide bond formation. It has been suggested to have peptidyltransferase activity; this is somewhat controversial. Makes several contacts with the 16S rRNA in the 70S ribosome. The sequence is that of Large ribosomal subunit protein uL2 from Lactococcus lactis subsp. lactis (strain IL1403) (Streptococcus lactis).